Here is a 58-residue protein sequence, read N- to C-terminus: uncharacterized protein (58 aa).

4Fe-4S ferredoxin-type domains follow at residues 2 to 27 (GIKILEKCVGCGNCVVFCPRRAIKTY) and 28 to 57 (GVAIVDENKCSNCGICARYCPINAIKVDTS). [4Fe-4S] cluster is bound by residues C9, C12, C15, C19, C37, C40, C43, and C47.

The cofactor is [4Fe-4S] cluster.

Functionally, ferredoxins are iron-sulfur proteins that transfer electrons probably in the CO-dehydrogenase complex. This is an uncharacterized protein from Methanocaldococcus jannaschii (strain ATCC 43067 / DSM 2661 / JAL-1 / JCM 10045 / NBRC 100440) (Methanococcus jannaschii).